Reading from the N-terminus, the 347-residue chain is UPF0284 protein LS215_0030 (347 aa).

The protein belongs to the UPF0284 family.

The sequence is that of UPF0284 protein LS215_0030 from Saccharolobus islandicus (strain L.S.2.15 / Lassen #1) (Sulfolobus islandicus).